A 359-amino-acid polypeptide reads, in one-letter code: Guanine nucleotide-binding protein subunit alpha-11 (359 aa).

2 S-palmitoyl cysteine lipidation sites follow: Cys9 and Cys10. The G-alpha domain maps to 38–359 (RELKLLLLGT…QLNLKEYNLV (322 aa)). Residues 41–54 (KLLLLGTGESGKST) are G1 motif. GTP contacts are provided by residues 46–53 (GTGESGKS) and 180–183 (LRVR). Ser53 contacts Mg(2+). Positions 178-186 (DVLRVRVPT) are G2 motif. Thr186 contributes to the Mg(2+) binding site. A G3 motif region spans residues 201-210 (FRMVDVGGQR). Residues 270 to 277 (ILFLNKKD) form a G4 motif region. Residues 274–277 (NKKD) and Ala331 contribute to the GTP site. Positions 329–334 (TCATDT) are G5 motif.

This sequence belongs to the G-alpha family. G(q) subfamily. In terms of assembly, g proteins are composed of 3 units; alpha, beta and gamma. The alpha chain contains the guanine nucleotide binding site. Interacts with RGS22. Interacts with NTSR1.

The protein resides in the cell membrane. Its subcellular location is the cytoplasm. The catalysed reaction is GTP + H2O = GDP + phosphate + H(+). Functionally, guanine nucleotide-binding proteins (G proteins) function as transducers downstream of G protein-coupled receptors (GPCRs) in numerous signaling cascades. The alpha chain contains the guanine nucleotide binding site and alternates between an active, GTP-bound state and an inactive, GDP-bound state. Signaling by an activated GPCR promotes GDP release and GTP binding. The alpha subunit has a low GTPase activity that converts bound GTP to GDP, thereby terminating the signal. Both GDP release and GTP hydrolysis are modulated by numerous regulatory proteins. Signaling is mediated via phospholipase C-beta-dependent inositol lipid hydrolysis for signal propagation: activates phospholipase C-beta: following GPCR activation, GNA11 activates PLC-beta (PLCB1, PLCB2, PLCB3 or PLCB4), leading to production of diacylglycerol (DAG) and inositol 1,4,5-trisphosphate (IP3). Transduces FFAR4 signaling in response to long-chain fatty acids (LCFAs). Together with GNAQ, required for heart development. In the respiratory epithelium, transmits OXGR1-dependent signals that lead to downstream intracellular Ca(2+) release and mucocilliary clearance of airborne pathogens. This is Guanine nucleotide-binding protein subunit alpha-11 (GNA11) from Bos taurus (Bovine).